Consider the following 148-residue polypeptide: Suppressor APC domain-containing protein 1 (148 aa).

The tract at residues serine 120–valine 148 is disordered.

The protein is Suppressor APC domain-containing protein 1 (SAPCD1) of Homo sapiens (Human).